Here is a 706-residue protein sequence, read N- to C-terminus: Mitochondrial intermediate peptidase, mitochondrial (706 aa).

A mitochondrion-targeting transit peptide spans Met1–Asp29. The segment at Asn212–Arg238 is disordered. Residues Thr214–Arg227 show a composition bias toward low complexity. His491 serves as a coordination point for Zn(2+). Glu492 is a catalytic residue. Zn(2+) contacts are provided by His495 and Glu520.

It belongs to the peptidase M3 family. The cofactor is Zn(2+).

Its subcellular location is the mitochondrion. In terms of biological role, aminopeptidase which cleaves preproteins, imported into the mitochondrion, to their mature size. Could cleave both preproteins and preprotein intermediates already cleaved by the mitochondrial processing peptidase (MPP). In Arabidopsis thaliana (Mouse-ear cress), this protein is Mitochondrial intermediate peptidase, mitochondrial.